A 210-amino-acid chain; its full sequence is UPF0301 protein CPS_1252 (210 aa).

The protein belongs to the UPF0301 (AlgH) family.

This chain is UPF0301 protein CPS_1252, found in Colwellia psychrerythraea (strain 34H / ATCC BAA-681) (Vibrio psychroerythus).